The following is a 408-amino-acid chain: Imidazolonepropionase (408 aa).

Residues His73 and His75 each coordinate Fe(3+). The Zn(2+) site is built by His73 and His75. The 4-imidazolone-5-propanoate site is built by Arg82, Tyr145, and His178. Residue Tyr145 participates in N-formimidoyl-L-glutamate binding. A Fe(3+)-binding site is contributed by His243. Zn(2+) is bound at residue His243. Gln246 contacts 4-imidazolone-5-propanoate. Asp318 is a Fe(3+) binding site. Asp318 contributes to the Zn(2+) binding site. The N-formimidoyl-L-glutamate site is built by Asn320 and Gly322. Ser323 is a 4-imidazolone-5-propanoate binding site.

This sequence belongs to the metallo-dependent hydrolases superfamily. HutI family. It depends on Zn(2+) as a cofactor. Requires Fe(3+) as cofactor.

It is found in the cytoplasm. It carries out the reaction 4-imidazolone-5-propanoate + H2O = N-formimidoyl-L-glutamate. It participates in amino-acid degradation; L-histidine degradation into L-glutamate; N-formimidoyl-L-glutamate from L-histidine: step 3/3. Functionally, catalyzes the hydrolytic cleavage of the carbon-nitrogen bond in imidazolone-5-propanoate to yield N-formimidoyl-L-glutamate. It is the third step in the universal histidine degradation pathway. This Shewanella woodyi (strain ATCC 51908 / MS32) protein is Imidazolonepropionase.